The primary structure comprises 123 residues: Small ribosomal subunit protein uS12 (123 aa).

3-methylthioaspartic acid is present on aspartate 89.

It belongs to the universal ribosomal protein uS12 family. As to quaternary structure, part of the 30S ribosomal subunit. Contacts proteins S8 and S17. May interact with IF1 in the 30S initiation complex.

Its function is as follows. With S4 and S5 plays an important role in translational accuracy. In terms of biological role, interacts with and stabilizes bases of the 16S rRNA that are involved in tRNA selection in the A site and with the mRNA backbone. Located at the interface of the 30S and 50S subunits, it traverses the body of the 30S subunit contacting proteins on the other side and probably holding the rRNA structure together. The combined cluster of proteins S8, S12 and S17 appears to hold together the shoulder and platform of the 30S subunit. This chain is Small ribosomal subunit protein uS12, found in Rhodopseudomonas palustris (strain HaA2).